Here is a 288-residue protein sequence, read N- to C-terminus: uncharacterized protein (288 aa).

Residues 1-12 are compositionally biased toward basic and acidic residues; sequence MTEGRCAQHPDG. The disordered stretch occupies residues 1 to 20; that stretch reads MTEGRCAQHPDGLDVQDVCD.

It belongs to the class IV-like SAM-binding methyltransferase superfamily. RNA methyltransferase TrmH family.

This is an uncharacterized protein from Mycobacterium tuberculosis (strain ATCC 25618 / H37Rv).